Here is a 927-residue protein sequence, read N- to C-terminus: Lysine-specific demethylase JMJ28 (927 aa).

The WRC domain maps to 7 to 52 (VPDEFRCNRSDGKQWRCKRRALEGKKMCESHHSQQSLKRSKQKVAE). The Nuclear localization signal 1 signature appears at 30-37 (GKKMCESH). Residues 30 to 92 (GKKMCESHHS…RLGKSKRKRV (63 aa)) form a disordered region. Basic residues predominate over residues 80–91 (RSKRLGKSKRKR). The short motif at 127 to 134 (EKRKRLPN) is the Nuclear localization signal 2 element. 8 residues coordinate Zn(2+): Cys227, Cys230, Cys241, Cys244, Cys250, Cys253, Cys269, and Cys272. An RING-type; degenerate zinc finger spans residues 227-273 (CHWCGTRGFGDLISCLSCEREFFCIDCIEKRNKGSKEEVEKKCPVCR). A compositionally biased stretch (basic and acidic residues) spans 330–339 (ENDAEKKEGN). Disordered stretches follow at residues 330-359 (ENDA…QPCS) and 701-736 (RSKN…SQHC). Residues 601 to 881 (FPNHYAEILN…ESIKRVKELN (281 aa)) enclose the JmjC domain.

It belongs to the JARID1 histone demethylase family. Interacts with the FBH transcription factors FBH1, FBH2, FBH3 and FBH4. Fe(2+) is required as a cofactor. In terms of tissue distribution, expressed in inflorescences, flowers, roots, siliques, leaves and stems, especially in the vasculature (mainly phloem), with highest levels in floral organs. Present at high levels in flowers, shoot apex and young seeds, but observed at low levels in dry seeds, root apex and anthers.

The protein localises to the nucleus. Functionally, may function as histone H3 lysine demethylase and be involved in regulation of gene expression. Regulates flowering time by promoting CONSTANS (CO) and CONSTANS-LIKE genes (e.g. COL2 and COL5) expression via interaction with FBH transcription factors (FBH1, FBH2, FBH3 and FBH4) at their loci to remove H3K9me2 repressive histone marks. Also modulates the expression of several developmental genes such as MYB30, TFS1, AGL6 and RVE2. The protein is Lysine-specific demethylase JMJ28 of Arabidopsis thaliana (Mouse-ear cress).